Reading from the N-terminus, the 132-residue chain is D-ribose pyranase (132 aa).

His-20 acts as the Proton donor in catalysis. Substrate is bound by residues Asp-28, His-99, and 121–123; that span reads YSN.

This sequence belongs to the RbsD / FucU family. RbsD subfamily. As to quaternary structure, homodecamer.

The protein resides in the cytoplasm. The enzyme catalyses beta-D-ribopyranose = beta-D-ribofuranose. Its pathway is carbohydrate metabolism; D-ribose degradation; D-ribose 5-phosphate from beta-D-ribopyranose: step 1/2. Catalyzes the interconversion of beta-pyran and beta-furan forms of D-ribose. The polypeptide is D-ribose pyranase (Streptococcus agalactiae serotype Ia (strain ATCC 27591 / A909 / CDC SS700)).